Consider the following 67-residue polypeptide: Large ribosomal subunit protein bL35 (67 aa).

This sequence belongs to the bacterial ribosomal protein bL35 family.

This chain is Large ribosomal subunit protein bL35, found in Dehalococcoides mccartyi (strain ATCC BAA-2266 / KCTC 15142 / 195) (Dehalococcoides ethenogenes (strain 195)).